Here is a 320-residue protein sequence, read N- to C-terminus: uncharacterized protein (320 aa).

The region spanning 13–132 is the Arf-GAP domain; that stretch reads ALVLKSLLRE…VLYPEIPSPE (120 aa). A C4-type zinc finger spans residues 28–52; it reads CADCKRNEQPRWASWNLGVFICIRC. Disordered stretches follow at residues 153–212, 227–261, and 284–320; these read NTAS…STRQ, RPQV…YGAF, and NVTS…DVWK. The segment covering 154-176 has biased composition (low complexity); sequence TASRSSSAHSVKSTSSATVTNVT. Composition is skewed to polar residues over residues 183-210 and 228-244; these read SATT…APST and PQVS…YQNL. Low complexity-rich tracts occupy residues 245–257 and 295–310; these read PSPV…SSQP and SPVQ…SLDS.

The protein resides in the cytoplasm. It is found in the golgi apparatus. Its function is as follows. GTPase-activating protein for the ADP ribosylation factor family. This is an uncharacterized protein from Schizosaccharomyces pombe (strain 972 / ATCC 24843) (Fission yeast).